A 37-amino-acid polypeptide reads, in one-letter code: MVEVLLSGIVLGLVPVTITGLFVAAYLQYRRGNQFGL.

Residues 5-25 (LLSGIVLGLVPVTITGLFVAA) form a helical membrane-spanning segment.

This sequence belongs to the PetG family. As to quaternary structure, the 4 large subunits of the cytochrome b6-f complex are cytochrome b6, subunit IV (17 kDa polypeptide, PetD), cytochrome f and the Rieske protein, while the 4 small subunits are PetG, PetL, PetM and PetN. The complex functions as a dimer.

It is found in the plastid. It localises to the chloroplast thylakoid membrane. Its function is as follows. Component of the cytochrome b6-f complex, which mediates electron transfer between photosystem II (PSII) and photosystem I (PSI), cyclic electron flow around PSI, and state transitions. PetG is required for either the stability or assembly of the cytochrome b6-f complex. The sequence is that of Cytochrome b6-f complex subunit 5 from Emiliania huxleyi (Coccolithophore).